The sequence spans 170 residues: ATP synthase subunit b (170 aa).

A helical transmembrane segment spans residues 22–44 (IINLAVVVFGLYKFLPGFLGKIL).

Belongs to the ATPase B chain family. In terms of assembly, F-type ATPases have 2 components, F(1) - the catalytic core - and F(0) - the membrane proton channel. F(1) has five subunits: alpha(3), beta(3), gamma(1), delta(1), epsilon(1). F(0) has four main subunits: a(1), b(1), b'(1) and c(10-14). The alpha and beta chains form an alternating ring which encloses part of the gamma chain. F(1) is attached to F(0) by a central stalk formed by the gamma and epsilon chains, while a peripheral stalk is formed by the delta, b and b' chains.

The protein localises to the cellular thylakoid membrane. Functionally, f(1)F(0) ATP synthase produces ATP from ADP in the presence of a proton or sodium gradient. F-type ATPases consist of two structural domains, F(1) containing the extramembraneous catalytic core and F(0) containing the membrane proton channel, linked together by a central stalk and a peripheral stalk. During catalysis, ATP synthesis in the catalytic domain of F(1) is coupled via a rotary mechanism of the central stalk subunits to proton translocation. Component of the F(0) channel, it forms part of the peripheral stalk, linking F(1) to F(0). The polypeptide is ATP synthase subunit b (Prochlorococcus marinus (strain NATL1A)).